The following is a 114-amino-acid chain: Fructose-bisphosphate aldolase 2 (114 aa).

Asn35–Thr38 lines the dihydroxyacetone phosphate pocket.

The protein belongs to the class II fructose-bisphosphate aldolase family. As to quaternary structure, homodimer. Requires Zn(2+) as cofactor.

The catalysed reaction is beta-D-fructose 1,6-bisphosphate = D-glyceraldehyde 3-phosphate + dihydroxyacetone phosphate. Its pathway is carbohydrate biosynthesis; Calvin cycle. It participates in carbohydrate degradation; glycolysis; D-glyceraldehyde 3-phosphate and glycerone phosphate from D-glucose: step 4/4. In terms of biological role, catalyzes the aldol condensation of dihydroxyacetone phosphate (DHAP or glycerone-phosphate) with glyceraldehyde 3-phosphate (G3P) to form fructose 1,6-bisphosphate (FBP) in gluconeogenesis and the reverse reaction in glycolysis. The chain is Fructose-bisphosphate aldolase 2 (cbbA) from Rhodobacter capsulatus (Rhodopseudomonas capsulata).